Consider the following 216-residue polypeptide: Glycerol-3-phosphate acyltransferase (216 aa).

5 consecutive transmembrane segments (helical) span residues 4 to 24 (TIIGLILAYLLGSIPTGLWIG), 71 to 91 (LPFFLHIEGVSPLVFGLLAVI), 113 to 133 (VVLGFSPAFFVYLIVIFASIL), 144 to 164 (VLSAVIAILSALLFPLVGFIL), and 165 to 185 (PSYDLFFTLIIIALALIIILR).

The protein belongs to the PlsY family. Probably interacts with PlsX.

Its subcellular location is the cell membrane. It catalyses the reaction an acyl phosphate + sn-glycerol 3-phosphate = a 1-acyl-sn-glycero-3-phosphate + phosphate. Its pathway is lipid metabolism; phospholipid metabolism. Its function is as follows. Catalyzes the transfer of an acyl group from acyl-phosphate (acyl-PO(4)) to glycerol-3-phosphate (G3P) to form lysophosphatidic acid (LPA). This enzyme utilizes acyl-phosphate as fatty acyl donor, but not acyl-CoA or acyl-ACP. The polypeptide is Glycerol-3-phosphate acyltransferase (Streptococcus sanguinis (strain SK36)).